The primary structure comprises 290 residues: Serpentine receptor class U-26 (290 aa).

7 consecutive transmembrane segments (helical) span residues 31–51 (LPML…IIIL), 70–90 (LLSA…ADFL), 112–134 (FITI…PFLV), 158–178 (FSIP…FPAI), 185–205 (AYPF…FGLV), 213–233 (NTLF…LLLI), and 262–282 (MIFS…LHIV).

It belongs to the nematode receptor-like protein sru family.

The protein localises to the membrane. In Caenorhabditis elegans, this protein is Serpentine receptor class U-26 (sru-26).